The chain runs to 373 residues: Protein-glutamate methylesterase/protein-glutamine glutaminase 1 (373 aa).

In terms of domain architecture, Response regulatory spans 16–133 (RVVVVDDSAL…ASGLTELSDQ (118 aa)). Asp67 is modified (4-aspartylphosphate). Positions 175-367 (RVSTEKLICI…PALIAKLSSA (193 aa)) constitute a CheB-type methylesterase domain. Residues Ser187, His213, and Asp309 contribute to the active site.

The protein belongs to the CheB family. Post-translationally, phosphorylated by CheA. Phosphorylation of the N-terminal regulatory domain activates the methylesterase activity.

It is found in the cytoplasm. The enzyme catalyses [protein]-L-glutamate 5-O-methyl ester + H2O = L-glutamyl-[protein] + methanol + H(+). The catalysed reaction is L-glutaminyl-[protein] + H2O = L-glutamyl-[protein] + NH4(+). Involved in chemotaxis. Part of a chemotaxis signal transduction system that modulates chemotaxis in response to various stimuli. Catalyzes the demethylation of specific methylglutamate residues introduced into the chemoreceptors (methyl-accepting chemotaxis proteins or MCP) by CheR. Also mediates the irreversible deamidation of specific glutamine residues to glutamic acid. The sequence is that of Protein-glutamate methylesterase/protein-glutamine glutaminase 1 from Albidiferax ferrireducens (strain ATCC BAA-621 / DSM 15236 / T118) (Rhodoferax ferrireducens).